Consider the following 82-residue polypeptide: Cytochrome c-551 (82 aa).

Heme c-binding residues include Cys-12, Cys-15, His-16, and Met-61.

Post-translationally, binds 1 heme c group covalently per subunit.

This is a prokaryotic monoheme cytochrome, unreactive with mitochondrial cytochrome C oxidase or reductase. It functions in nitrite and nitrate respiration in Pseudomonas, but it is also found in other bacteria. This Ectopseudomonas mendocina (Pseudomonas mendocina) protein is Cytochrome c-551.